The primary structure comprises 237 residues: Demethylmenaquinone methyltransferase (237 aa).

S-adenosyl-L-methionine contacts are provided by residues T58, D79, and N106–A107.

It belongs to the class I-like SAM-binding methyltransferase superfamily. MenG/UbiE family.

The enzyme catalyses a 2-demethylmenaquinol + S-adenosyl-L-methionine = a menaquinol + S-adenosyl-L-homocysteine + H(+). Its pathway is quinol/quinone metabolism; menaquinone biosynthesis; menaquinol from 1,4-dihydroxy-2-naphthoate: step 2/2. Its function is as follows. Methyltransferase required for the conversion of demethylmenaquinol (DMKH2) to menaquinol (MKH2). The polypeptide is Demethylmenaquinone methyltransferase (Listeria monocytogenes serotype 4a (strain HCC23)).